A 928-amino-acid polypeptide reads, in one-letter code: Isoleucine--tRNA ligase (928 aa).

Residues 57 to 67 carry the 'HIGH' region motif; the sequence is PFANGNIHMGH. Glu552 is a binding site for L-isoleucyl-5'-AMP. A 'KMSKS' region motif is present at residues 593–597; it reads KMSKS. Residue Lys596 participates in ATP binding. Cys887, Cys890, Cys907, and Cys910 together coordinate Zn(2+).

It belongs to the class-I aminoacyl-tRNA synthetase family. IleS type 1 subfamily. Monomer. Zn(2+) serves as cofactor.

Its subcellular location is the cytoplasm. The enzyme catalyses tRNA(Ile) + L-isoleucine + ATP = L-isoleucyl-tRNA(Ile) + AMP + diphosphate. Its function is as follows. Catalyzes the attachment of isoleucine to tRNA(Ile). As IleRS can inadvertently accommodate and process structurally similar amino acids such as valine, to avoid such errors it has two additional distinct tRNA(Ile)-dependent editing activities. One activity is designated as 'pretransfer' editing and involves the hydrolysis of activated Val-AMP. The other activity is designated 'posttransfer' editing and involves deacylation of mischarged Val-tRNA(Ile). The polypeptide is Isoleucine--tRNA ligase (Lacticaseibacillus paracasei (strain ATCC 334 / BCRC 17002 / CCUG 31169 / CIP 107868 / KCTC 3260 / NRRL B-441) (Lactobacillus paracasei)).